The sequence spans 289 residues: Agmatinase (289 aa).

Residues histidine 112, aspartate 135, histidine 137, aspartate 139, aspartate 216, and aspartate 218 each coordinate Mn(2+).

Belongs to the arginase family. Agmatinase subfamily. It depends on Mn(2+) as a cofactor.

It carries out the reaction agmatine + H2O = urea + putrescine. It participates in amine and polyamine biosynthesis; putrescine biosynthesis via agmatine pathway; putrescine from agmatine: step 1/1. Its function is as follows. Catalyzes the formation of putrescine from agmatine. This is Agmatinase (speB) from Halalkalibacterium halodurans (strain ATCC BAA-125 / DSM 18197 / FERM 7344 / JCM 9153 / C-125) (Bacillus halodurans).